Consider the following 353-residue polypeptide: Glutamine synthetase cytosolic isozyme 1-5 (353 aa).

At Thr-2 the chain carries N-acetylthreonine. At Ser-3 the chain carries Phosphoserine. Positions 19–99 constitute a GS beta-grasp domain; the sequence is IIAEYIWIGG…VMCDAYRPAG (81 aa). A GS catalytic domain is found at 106 to 353; sequence NRHKAVKIFD…TSMIAETTIL (248 aa).

The protein belongs to the glutamine synthetase family. As to quaternary structure, homooctamer. Not expressed in roots.

The protein resides in the cytoplasm. The catalysed reaction is L-glutamate + NH4(+) + ATP = L-glutamine + ADP + phosphate + H(+). The protein is Glutamine synthetase cytosolic isozyme 1-5 (GLN1-5) of Arabidopsis thaliana (Mouse-ear cress).